Here is a 510-residue protein sequence, read N- to C-terminus: Cytochrome P450 90D2 (510 aa).

The helical transmembrane segment at 6–26 threads the bilayer; the sequence is MVGSGGVYSWPAALLVAAIVV. Cys444 is a heme binding site.

This sequence belongs to the cytochrome P450 family. It depends on heme as a cofactor.

The protein resides in the membrane. It carries out the reaction 3-epi-6-deoxocathasterone + reduced [NADPH--hemoprotein reductase] + O2 = 6-deoxotyphasterol + oxidized [NADPH--hemoprotein reductase] + H2O + H(+). It catalyses the reaction (22S,24R)-22-hydroxy-5alpha-ergostan-3-one + reduced [NADPH--hemoprotein reductase] + O2 = 3-dehydro-6-deoxoteasterone + oxidized [NADPH--hemoprotein reductase] + H2O + H(+). The enzyme catalyses 6-deoxycathasterone + reduced [NADPH--hemoprotein reductase] + O2 = 6-deoxoteasterone + oxidized [NADPH--hemoprotein reductase] + H2O + H(+). The protein operates within plant hormone biosynthesis; brassinosteroid biosynthesis. Its function is as follows. Involved in reduction steps of the biosynthesis of plant campesterol-derivative steroids, ending to castasterone (CS) but missing brassinolide (BL). Catalyzes the conversion of (22S,24R)-22-hydroxy-5alpha-ergostan-3-one (22-hydroxy-campesta-3-one, 22-OH-3-one) to 3-dehydro-6-deoxoteasterone (6-deoxo3DT, 6-deoxo-3-DHT), 3-epi-6-deoxocathasterone (3-epi-6-deoxoCT) to 6-deoxotyphasterol (6-deoxoTY) and of 6-deoxocathasterone (6-deoxoCT) to 6-deoxoteasterone (6-deoxoTE). The sequence is that of Cytochrome P450 90D2 from Brachypodium distachyon (Purple false brome).